A 304-amino-acid polypeptide reads, in one-letter code: NADH-cytochrome b5 reductase 2 (304 aa).

Residues Gly6–Leu26 form a helical membrane-spanning segment. The region spanning Gln43–Lys155 is the FAD-binding FR-type domain. FAD is bound by residues Asp135–Asp165 and Phe174–Leu209.

This sequence belongs to the flavoprotein pyridine nucleotide cytochrome reductase family. FAD is required as a cofactor.

Its subcellular location is the membrane. It catalyses the reaction 2 Fe(III)-[cytochrome b5] + NADH = 2 Fe(II)-[cytochrome b5] + NAD(+) + H(+). NADH-cytochrome b5 reductases are involved in desaturation and elongation of fatty acids, cholesterol biosynthesis and drug metabolism. In Gallus gallus (Chicken), this protein is NADH-cytochrome b5 reductase 2 (CYB5R2).